The chain runs to 235 residues: Putative uridine kinase C227.14 (235 aa).

36-43 is a binding site for ATP; sequence GGPGSGKS.

This sequence belongs to the uridine kinase family.

The protein resides in the cytoplasm. The protein localises to the nucleus. It carries out the reaction uridine + ATP = UMP + ADP + H(+). The enzyme catalyses cytidine + ATP = CMP + ADP + H(+). The protein operates within pyrimidine metabolism; CTP biosynthesis via salvage pathway; CTP from cytidine: step 1/3. Its pathway is pyrimidine metabolism; UMP biosynthesis via salvage pathway; UMP from uridine: step 1/1. In Schizosaccharomyces pombe (strain 972 / ATCC 24843) (Fission yeast), this protein is Putative uridine kinase C227.14.